Consider the following 218-residue polypeptide: Pyridoxine/pyridoxamine 5'-phosphate oxidase (218 aa).

Substrate contacts are provided by residues 14-17 (RREY) and lysine 72. FMN contacts are provided by residues 67 to 72 (RIVLLK), 82 to 83 (YT), arginine 88, lysine 89, and glutamine 111. Residues tyrosine 129, arginine 133, and serine 137 each coordinate substrate. FMN-binding positions include 146 to 147 (QS) and tryptophan 191. Substrate is bound at residue 197–199 (RLH). Arginine 201 lines the FMN pocket.

Belongs to the pyridoxamine 5'-phosphate oxidase family. As to quaternary structure, homodimer. It depends on FMN as a cofactor.

It catalyses the reaction pyridoxamine 5'-phosphate + O2 + H2O = pyridoxal 5'-phosphate + H2O2 + NH4(+). The catalysed reaction is pyridoxine 5'-phosphate + O2 = pyridoxal 5'-phosphate + H2O2. It participates in cofactor metabolism; pyridoxal 5'-phosphate salvage; pyridoxal 5'-phosphate from pyridoxamine 5'-phosphate: step 1/1. Its pathway is cofactor metabolism; pyridoxal 5'-phosphate salvage; pyridoxal 5'-phosphate from pyridoxine 5'-phosphate: step 1/1. Catalyzes the oxidation of either pyridoxine 5'-phosphate (PNP) or pyridoxamine 5'-phosphate (PMP) into pyridoxal 5'-phosphate (PLP). The polypeptide is Pyridoxine/pyridoxamine 5'-phosphate oxidase (Escherichia coli O139:H28 (strain E24377A / ETEC)).